The chain runs to 464 residues: Cysteine--tRNA ligase (464 aa).

C29 provides a ligand contact to Zn(2+). The 'HIGH' region motif lies at 31 to 41 (PTVYDFAHIGN). Zn(2+) is bound by residues C224, H249, and E253. A 'KMSKS' region motif is present at residues 282-286 (KMSKS). K285 lines the ATP pocket.

The protein belongs to the class-I aminoacyl-tRNA synthetase family. Monomer. The cofactor is Zn(2+).

The protein localises to the cytoplasm. It catalyses the reaction tRNA(Cys) + L-cysteine + ATP = L-cysteinyl-tRNA(Cys) + AMP + diphosphate. This chain is Cysteine--tRNA ligase, found in Afipia carboxidovorans (strain ATCC 49405 / DSM 1227 / KCTC 32145 / OM5) (Oligotropha carboxidovorans).